A 203-amino-acid polypeptide reads, in one-letter code: Ribosomal RNA large subunit methyltransferase E (203 aa).

S-adenosyl-L-methionine contacts are provided by Gly-60, Trp-62, Asp-79, Asp-95, and Asp-119. The active-site Proton acceptor is the Lys-159.

The protein belongs to the class I-like SAM-binding methyltransferase superfamily. RNA methyltransferase RlmE family.

It localises to the cytoplasm. The enzyme catalyses uridine(2552) in 23S rRNA + S-adenosyl-L-methionine = 2'-O-methyluridine(2552) in 23S rRNA + S-adenosyl-L-homocysteine + H(+). Specifically methylates the uridine in position 2552 of 23S rRNA at the 2'-O position of the ribose in the fully assembled 50S ribosomal subunit. This Pelagibacter ubique (strain HTCC1062) protein is Ribosomal RNA large subunit methyltransferase E.